The following is a 636-amino-acid chain: 1-deoxy-D-xylulose-5-phosphate synthase (636 aa).

Thiamine diphosphate-binding positions include H72 and 113–115 (GHA). Residue D144 participates in Mg(2+) binding. Residues 145–146 (GS), N174, Y287, and E370 contribute to the thiamine diphosphate site. A Mg(2+)-binding site is contributed by N174.

The protein belongs to the transketolase family. DXPS subfamily. Homodimer. It depends on Mg(2+) as a cofactor. Thiamine diphosphate is required as a cofactor.

It catalyses the reaction D-glyceraldehyde 3-phosphate + pyruvate + H(+) = 1-deoxy-D-xylulose 5-phosphate + CO2. It functions in the pathway metabolic intermediate biosynthesis; 1-deoxy-D-xylulose 5-phosphate biosynthesis; 1-deoxy-D-xylulose 5-phosphate from D-glyceraldehyde 3-phosphate and pyruvate: step 1/1. Catalyzes the acyloin condensation reaction between C atoms 2 and 3 of pyruvate and glyceraldehyde 3-phosphate to yield 1-deoxy-D-xylulose-5-phosphate (DXP). This Synechococcus sp. (strain ATCC 27144 / PCC 6301 / SAUG 1402/1) (Anacystis nidulans) protein is 1-deoxy-D-xylulose-5-phosphate synthase.